The chain runs to 687 residues: Glycine--tRNA ligase beta subunit (687 aa).

The protein belongs to the class-II aminoacyl-tRNA synthetase family. In terms of assembly, tetramer of two alpha and two beta subunits.

The protein localises to the cytoplasm. The enzyme catalyses tRNA(Gly) + glycine + ATP = glycyl-tRNA(Gly) + AMP + diphosphate. The sequence is that of Glycine--tRNA ligase beta subunit from Geobacter sulfurreducens (strain ATCC 51573 / DSM 12127 / PCA).